A 201-amino-acid polypeptide reads, in one-letter code: Small ribosomal subunit protein uS4c (201 aa).

Residues 15-43 (LGALPGLTNKRPRAGSDLRNQSRSGKRSQ) form a disordered region. Residues 89–149 (MRLDNILFRL…DEQKSIALIQ (61 aa)) enclose the S4 RNA-binding domain.

Component of the chloroplast small ribosomal subunit (SSU). Mature 70S chloroplast ribosomes of higher plants consist of a small (30S) and a large (50S) subunit. The 30S small subunit contains 1 molecule of ribosomal RNA (16S rRNA) and 24 different proteins. The 50S large subunit contains 3 rRNA molecules (23S, 5S and 4.5S rRNA) and 33 different proteins.

Its subcellular location is the plastid. The protein localises to the chloroplast. Component of the chloroplast ribosome (chloro-ribosome), a dedicated translation machinery responsible for the synthesis of chloroplast genome-encoded proteins, including proteins of the transcription and translation machinery and components of the photosynthetic apparatus. The polypeptide is Small ribosomal subunit protein uS4c (rps4) (Spinacia oleracea (Spinach)).